A 344-amino-acid polypeptide reads, in one-letter code: uncharacterized protein (344 aa).

Residues K38 and Y167 each contribute to the NADP(+) site.

It belongs to the NAD(P)-dependent epimerase/dehydratase family. Dihydroflavonol-4-reductase subfamily.

This is an uncharacterized protein from Saccharomyces cerevisiae (strain ATCC 204508 / S288c) (Baker's yeast).